We begin with the raw amino-acid sequence, 126 residues long: Large ribosomal subunit protein bL12 (126 aa).

The span at 36-55 (APAPAAAPAAGGDQGGAEAA) shows a compositional bias: low complexity. Residues 36–57 (APAPAAAPAAGGDQGGAEAAEQ) form a disordered region.

Belongs to the bacterial ribosomal protein bL12 family. As to quaternary structure, homodimer. Part of the ribosomal stalk of the 50S ribosomal subunit. Forms a multimeric L10(L12)X complex, where L10 forms an elongated spine to which 2 to 4 L12 dimers bind in a sequential fashion. Binds GTP-bound translation factors.

Its function is as follows. Forms part of the ribosomal stalk which helps the ribosome interact with GTP-bound translation factors. Is thus essential for accurate translation. In Natranaerobius thermophilus (strain ATCC BAA-1301 / DSM 18059 / JW/NM-WN-LF), this protein is Large ribosomal subunit protein bL12.